Here is a 306-residue protein sequence, read N- to C-terminus: GTPase IMAP family member 1 (306 aa).

The disordered stretch occupies residues 1 to 21; sequence MGGRKMATDEENVYGLEENAQ. Residues 1 to 272 lie on the Cytoplasmic side of the membrane; that stretch reads MGGRKMATDE…RLWKWLKSPR (272 aa). One can recognise an AIG1-type G domain in the interval 25 to 229; the sequence is ESTRRLILVG…YSNEVYELAQ (205 aa). Residues 34 to 41 are G1; that stretch reads GRTGAGKS. Residues 34–42 and serine 55 each bind GTP; that span reads GRTGAGKSA. Residues 61-65 are G2; it reads SVTRA. Residues 82-85 are G3; it reads DTPD. The G4 stretch occupies residues 152 to 155; the sequence is TRKE. Residues 153 to 155 and asparagine 190 each bind GTP; that span reads RKE. The interval 189-191 is G5; that stretch reads DNR. A helical; Anchor for type IV membrane protein membrane pass occupies residues 273 to 292; the sequence is SWRLGLALLLGGALLFWVLL. Over 293-306 the chain is Lumenal; the sequence is HRRWSEAVAEVGPD.

This sequence belongs to the TRAFAC class TrmE-Era-EngA-EngB-Septin-like GTPase superfamily. AIG1/Toc34/Toc159-like paraseptin GTPase family. IAN subfamily. Predominantly expressed in the spleen and to a lesser extent in the lymph nodes. Detected in T-cells.

The protein localises to the endoplasmic reticulum membrane. Its subcellular location is the golgi apparatus membrane. Its function is as follows. May regulate lymphocyte survival. Required for normal levels of mature T-lymphocytes and mature B-cells. This chain is GTPase IMAP family member 1 (GIMAP1), found in Homo sapiens (Human).